The sequence spans 98 residues: Feather beta keratin (98 aa).

At serine 2 the chain carries N-acetylserine.

Belongs to the avian keratin family. As to quaternary structure, the avian keratins (F-ker, S-ker, C-ker and B-ker) are a complex mixture of very similar polypeptides.

This Cathartes aura (Turkey vulture) protein is Feather beta keratin.